The primary structure comprises 199 residues: Putative acetyltransferase SACOL2570 (199 aa).

It belongs to the transferase hexapeptide repeat family.

In Staphylococcus aureus (strain COL), this protein is Putative acetyltransferase SACOL2570.